The sequence spans 89 residues: Elongation factor 1-beta (89 aa).

Belongs to the EF-1-beta/EF-1-delta family.

Its function is as follows. Promotes the exchange of GDP for GTP in EF-1-alpha/GDP, thus allowing the regeneration of EF-1-alpha/GTP that could then be used to form the ternary complex EF-1-alpha/GTP/AAtRNA. This is Elongation factor 1-beta from Methanococcus maripaludis (strain DSM 14266 / JCM 13030 / NBRC 101832 / S2 / LL).